A 333-amino-acid polypeptide reads, in one-letter code: D-alanine--D-alanine ligase (333 aa).

One can recognise an ATP-grasp domain in the interval 124 to 329 (KMWFSALGIP…FTEYLYSNIK (206 aa)). 154–209 (ALETWGSVFIKAASQGSSVGCYRVDSIDELASSLKEAFSYSPYVVVEKTIHARELE) is a binding site for ATP. Asp283, Glu296, and Asn298 together coordinate Mg(2+).

Belongs to the D-alanine--D-alanine ligase family. It depends on Mg(2+) as a cofactor. Requires Mn(2+) as cofactor.

The protein localises to the cytoplasm. It carries out the reaction 2 D-alanine + ATP = D-alanyl-D-alanine + ADP + phosphate + H(+). Its pathway is cell wall biogenesis; peptidoglycan biosynthesis. Functionally, cell wall formation. The sequence is that of D-alanine--D-alanine ligase from Shewanella sediminis (strain HAW-EB3).